Consider the following 486-residue polypeptide: Heme A synthase COX15 (486 aa).

A mitochondrion-targeting transit peptide spans 1–33; it reads MLFRNIEVGRQAAKLLTRTSSRLAWQSIGASRN. Residues 34-85 lie on the Mitochondrial matrix side of the membrane; it reads ISTIRQQIRKTQLYNFKKTVSIRPFSLSSPVFKPHVASESNPIESRLKTSKN. The helical transmembrane segment at 86–106 threads the bilayer; it reads VAYWLIGTSGLVFGIVVLGGL. Topologically, residues 107–170 are mitochondrial intermembrane; that stretch reads TRLTESGLSI…FIFFMEWIHR (64 aa). Residue H169 participates in heme o binding. Residues 171 to 191 form a helical membrane-spanning segment; it reads LWGRAIGAVFILPAVYFAVSK. The Mitochondrial matrix segment spans residues 192 to 200; that stretch reads KTSGHVNKR. Residues 201 to 221 traverse the membrane as a helical segment; it reads LFGLAGLLGLQGFVGWWMVKS. Over 222–243 the chain is Mitochondrial intermembrane; the sequence is GLDQEQLDARKSKPTVSQYRLT. Residues 244–264 form a helical membrane-spanning segment; the sequence is THLGTAFFLYMGMLWTGLEIL. Heme o is bound at residue H245. Over 265 to 293 the chain is Mitochondrial matrix; sequence RECKWIKNPVQAISLFKKLDNPAIGPMRK. A helical membrane pass occupies residues 294 to 314; the sequence is ISLALLAVSFLTAMSGGMVAG. Residues 315-364 are Mitochondrial intermembrane-facing; sequence LDAGWVYNTWPKMGERWFPSSRELMDENFCRREDKKDLWWRNLLENPVTV. The helical transmembrane segment at 365–387 threads the bilayer; it reads QLVHRTCAYVAFTSVLAAHMYAI. A heme b-binding site is contributed by H368. Residues 388–402 are Mitochondrial matrix-facing; sequence KKKAVIPRNAMTSLH. Residues 403-423 form a helical membrane-spanning segment; it reads VMMGVVTLQATLGILTILYLV. P424 is a topological domain (mitochondrial intermembrane). A helical transmembrane segment spans residues 425–445; the sequence is ISLASIHQAGALALLTSSLVF. H431 is a binding site for heme b. The Mitochondrial matrix segment spans residues 446 to 486; the sequence is ASQLRKPRAPMRNVIITLPHSSKVTSGKILSEASKLASKPL.

This sequence belongs to the COX15/CtaA family. Type 2 subfamily. In terms of assembly, forms 200-350 kDa oligomeric complexes independent on heme binding. In addition to form homooligomeric complexes, a portion also associates with the mitochondrial respiratory supercomplexes. Interacts with CcO assembly factors PET117, SHY1, COA3 and COA1, CcO subunit COX13 and cytochrome b-c1 subunit COR1. It depends on heme b as a cofactor.

The protein resides in the mitochondrion inner membrane. It catalyses the reaction Fe(II)-heme o + 2 A + H2O = Fe(II)-heme a + 2 AH2. It functions in the pathway porphyrin-containing compound metabolism; heme A biosynthesis; heme A from heme O: step 1/1. In terms of biological role, catalyzes the second reaction in the biosynthesis of heme A, a prosthetic group of mitochondrial cytochrome c oxidase (CcO). Heme A is synthesized from heme B by two sequential enzymatic reactions catalyzed by heme O synthase (HOS/COX10) and heme A synthase (HAS/COX15). HAS catalyzes the conversion of heme O to heme A by two successive hydroxylations of the methyl group at C8, in a reaction that involves matrix ferredoxin YAH1 and ferredoxin reductase ARH1. The first hydroxylation forms heme I, the second hydroxylation results in an unstable dihydroxymethyl group, which spontaneously dehydrates, resulting in the formyl group of heme A. May also play a secondary role in CcO assembly. Plays a role in the maturation of COX1, the heme A-containing structural CcO subunit, possibly by interacting with the COX1-containing sub-assembly complexes that form prior to heme A insertion. May also positively regulate the upstream enzymatic reaction, farnesylation of heme B by HOS/COX10. The sequence is that of Heme A synthase COX15 from Saccharomyces cerevisiae (strain ATCC 204508 / S288c) (Baker's yeast).